The chain runs to 167 residues: Ubiquitin-fold modifier-conjugating enzyme 1 (167 aa).

The active-site Glycyl thioester intermediate is cysteine 116.

Belongs to the ubiquitin-conjugating enzyme family. UFC1 subfamily.

In terms of biological role, E2-like enzyme which forms an intermediate with UFM1 via a thioester linkage. This Anopheles gambiae (African malaria mosquito) protein is Ubiquitin-fold modifier-conjugating enzyme 1.